The sequence spans 496 residues: Deoxyribodipyrimidine photo-lyase (496 aa).

In terms of domain architecture, Photolyase/cryptochrome alpha/beta spans 28 to 160 (GPVVYWMFRD…EVDAHNVVPM (133 aa)). FAD-binding positions include Y256, 269–273 (LSGLS), 307–315 (ELIVRRELS), and 415–417 (DGR). E307 provides a ligand contact to DNA.

This sequence belongs to the DNA photolyase class-2 family. The cofactor is FAD. In terms of tissue distribution, highly expressed in flowers. Expressed in roots and stems.

It is found in the nucleus. The enzyme catalyses cyclobutadipyrimidine (in DNA) = 2 pyrimidine residues (in DNA).. Involved in repair of UV radiation-induced DNA damage. Catalyzes the light-dependent monomerization (300-600 nm) of cyclobutylpyrimidine dimers (CPDs), which are formed between adjacent bases on the same DNA strand upon exposure to ultraviolet radiation. Required for plant survival in the presence of UV-B light. Not involved in the repair of (6-4) photoproducts. This is Deoxyribodipyrimidine photo-lyase (PHR1) from Arabidopsis thaliana (Mouse-ear cress).